Here is a 446-residue protein sequence, read N- to C-terminus: Adenylosuccinate synthetase 1 (446 aa).

GTP-binding positions include 20–26 (GDEGKGK) and 48–50 (GHT). Asp-21 (proton acceptor) is an active-site residue. Mg(2+)-binding residues include Asp-21 and Gly-48. IMP-binding positions include 21–24 (DEGK), 46–49 (NAGH), Thr-137, Arg-151, Gln-232, Thr-247, and Arg-319. The active-site Proton donor is the His-49. Residue 315-321 (SVTGRPR) participates in substrate binding. GTP is bound by residues Arg-321, 347 to 349 (KLD), and 429 to 431 (STG).

It belongs to the adenylosuccinate synthetase family. Homodimer. It depends on Mg(2+) as a cofactor.

The protein resides in the cytoplasm. It carries out the reaction IMP + L-aspartate + GTP = N(6)-(1,2-dicarboxyethyl)-AMP + GDP + phosphate + 2 H(+). It functions in the pathway purine metabolism; AMP biosynthesis via de novo pathway; AMP from IMP: step 1/2. Its function is as follows. Plays an important role in the de novo pathway of purine nucleotide biosynthesis. Catalyzes the first committed step in the biosynthesis of AMP from IMP. The protein is Adenylosuccinate synthetase 1 of Cupriavidus pinatubonensis (strain JMP 134 / LMG 1197) (Cupriavidus necator (strain JMP 134)).